We begin with the raw amino-acid sequence, 485 residues long: Glutamate--tRNA ligase (485 aa).

The 'HIGH' region motif lies at 11 to 21 (PSPTGHLHIGN). Residues 252–256 (KLSKR) carry the 'KMSKS' region motif. Lys255 contacts ATP.

Belongs to the class-I aminoacyl-tRNA synthetase family. Glutamate--tRNA ligase type 1 subfamily. Monomer.

It localises to the cytoplasm. The catalysed reaction is tRNA(Glu) + L-glutamate + ATP = L-glutamyl-tRNA(Glu) + AMP + diphosphate. Catalyzes the attachment of glutamate to tRNA(Glu) in a two-step reaction: glutamate is first activated by ATP to form Glu-AMP and then transferred to the acceptor end of tRNA(Glu). The protein is Glutamate--tRNA ligase of Bacillus thuringiensis (strain Al Hakam).